The following is a 399-amino-acid chain: Probable WRKY transcription factor 48 (399 aa).

Basic and acidic residues-rich tracts occupy residues 1–11 (MEKKKEEDHHH) and 19–38 (KEIK…EQKQ). 2 disordered regions span residues 1–57 (MEKK…TSSD) and 138–202 (AESS…KNQK). Residues 143–161 (VVNTTPTSPNSTSVSSSSN) show a composition bias toward low complexity. Residues 162 to 171 (EAANDNNSGK) show a composition bias toward polar residues. Positions 184–193 (QQEQKGTKPQ) are enriched in low complexity. Residues 215–280 (SDIDNLDDGY…YEGQHTHPFP (66 aa)) constitute a DNA-binding region (WRKY). The tract at residues 361 to 399 (QASTSTSSSIRDHGLLQDILPSQIRSDTINTQTNEENKK) is disordered. Residues 383–399 (QIRSDTINTQTNEENKK) show a composition bias toward polar residues.

It localises to the nucleus. Functionally, transcription factor. Interacts specifically with the W box (5'-(T)TGAC[CT]-3'), a frequently occurring elicitor-responsive cis-acting element. The sequence is that of Probable WRKY transcription factor 48 (WRKY48) from Arabidopsis thaliana (Mouse-ear cress).